We begin with the raw amino-acid sequence, 446 residues long: SPARC-related modular calcium-binding protein 2 (446 aa).

The first 21 residues, 1–21 (MLLPQLCWLPLLAGLLPPVPA), serve as a signal peptide directing secretion. Residues 34 to 86 (QDKDKDCSLDCAGSPQKPLCASDGRTFLSRCEFQRAKCKDPQLEIAYRGNCKD) enclose the Kazal-like domain. 6 disulfides stabilise this stretch: C40–C71, C44–C64, C53–C84, C90–C113, C124–C131, and C133–C153. In terms of domain architecture, Thyroglobulin type-1 1 spans 87–153 (VSRCVAERKY…TAVAHKTPRC (67 aa)). A disordered region spans residues 147–228 (AHKTPRCPGS…EHQSALEEAK (82 aa)). Residues 161–172 (LPQREGTGKTDD) are compositionally biased toward basic and acidic residues. An N-linked (GlcNAc...) asparagine glycan is attached at N206. Residues 206-216 (NKTNKNSVSSC) are compositionally biased toward polar residues. One can recognise a Thyroglobulin type-1 2 domain in the interval 213 to 281 (VSSCDQEHQS…TSTRYEQPKC (69 aa)). 3 disulfides stabilise this stretch: C216–C240, C251–C258, and C260–C281. Residues 217 to 228 (DQEHQSALEEAK) are compositionally biased toward basic and acidic residues. EF-hand domains follow at residues 347-382 (LEER…LRKK) and 384-419 (KPKK…AKED). Ca(2+) is bound by residues D360, N362, S364, D366, E371, D397, N399, D401, S403, and E408. N362 carries an N-linked (GlcNAc...) asparagine glycan. Residues 416–446 (AKEDGKADTKKRHTPRGHAESTSNRQPRKQG) are disordered.

Binds various proteins from the extracellular matrix.

It localises to the secreted. The protein resides in the extracellular space. Its subcellular location is the extracellular matrix. The protein localises to the basement membrane. Functionally, promotes matrix assembly and cell adhesiveness. Can stimulate endothelial cell proliferation, migration, as well as angiogenesis. The protein is SPARC-related modular calcium-binding protein 2 (SMOC2) of Homo sapiens (Human).